The chain runs to 226 residues: Putative N-acetylmannosamine-6-phosphate 2-epimerase (226 aa).

It belongs to the NanE family.

The catalysed reaction is an N-acyl-D-glucosamine 6-phosphate = an N-acyl-D-mannosamine 6-phosphate. It functions in the pathway amino-sugar metabolism; N-acetylneuraminate degradation; D-fructose 6-phosphate from N-acetylneuraminate: step 3/5. Converts N-acetylmannosamine-6-phosphate (ManNAc-6-P) to N-acetylglucosamine-6-phosphate (GlcNAc-6-P). This Mycoplasma mycoides subsp. mycoides SC (strain CCUG 32753 / NCTC 10114 / PG1) protein is Putative N-acetylmannosamine-6-phosphate 2-epimerase.